Reading from the N-terminus, the 105-residue chain is Keratin-associated protein 17-1 (105 aa).

As to quaternary structure, interacts with hair keratins.

Its function is as follows. In the hair cortex, hair keratin intermediate filaments are embedded in an interfilamentous matrix, consisting of hair keratin-associated proteins (KRTAP), which are essential for the formation of a rigid and resistant hair shaft through their extensive disulfide bond cross-linking with abundant cysteine residues of hair keratins. The matrix proteins include the high-sulfur and high-glycine-tyrosine keratins. The sequence is that of Keratin-associated protein 17-1 (KRTAP17-1) from Homo sapiens (Human).